The chain runs to 116 residues: MAGRSGDSDDQLLLAVRLIKILYQSNPYPKPNGSRQARRNRRRRWRARQNQIDSISERIPSSCLGRPAEPVPLQLPPIERLRLDCSEDCGNSGTQGVGDPQISGEPCMVLGAGTKE.

Residues serine 5 and serine 8 each carry the phosphoserine; by host CK2 modification. Positions 18-26 are homomultimerization; it reads LIKILYQSN. The tract at residues 26 to 50 is disordered; the sequence is NPYPKPNGSRQARRNRRRRWRARQN. A Nuclear localization signal and RNA-binding (RRE) motif is present at residues 34-50; the sequence is SRQARRNRRRRWRARQN. Residues 36–47 show a composition bias toward basic residues; sequence QARRNRRRRWRA. Positions 73–84 match the Nuclear export signal and binding to XPO1 motif; it reads LQLPPIERLRLD. The disordered stretch occupies residues 91–116; it reads NSGTQGVGDPQISGEPCMVLGAGTKE. Residue serine 92 is modified to Phosphoserine; by host.

This sequence belongs to the HIV-1 REV protein family. In terms of assembly, homomultimer; when bound to the RRE. Multimeric assembly is essential for activity and may involve XPO1. Binds to human KPNB1, XPO1, TNPO1, RANBP5 and IPO7. Interacts with the viral Integrase. Interacts with human KHDRBS1. Interacts with human NAP1; this interaction decreases Rev multimerization and stimulates its activity. Interacts with human DEAD-box helicases DDX3 and DDX24; these interactions may serve for viral RNA export to the cytoplasm and packaging, respectively. Interacts with human PSIP1; this interaction may inhibit HIV-1 DNA integration by promoting dissociation of the Integrase-LEDGF/p75 complex. In terms of processing, asymmetrically arginine dimethylated at one site by host PRMT6. Methylation impairs the RNA-binding activity and export of viral RNA from the nucleus to the cytoplasm. Post-translationally, phosphorylated by protein kinase CK2. Presence of, and maybe binding to the N-terminus of the regulatory beta subunit of CK2 is necessary for CK2-mediated Rev's phosphorylation.

The protein resides in the host nucleus. It localises to the host nucleolus. The protein localises to the host cytoplasm. Functionally, escorts unspliced or incompletely spliced viral pre-mRNAs (late transcripts) out of the nucleus of infected cells. These pre-mRNAs carry a recognition sequence called Rev responsive element (RRE) located in the env gene, that is not present in fully spliced viral mRNAs (early transcripts). This function is essential since most viral proteins are translated from unspliced or partially spliced pre-mRNAs which cannot exit the nucleus by the pathway used by fully processed cellular mRNAs. Rev itself is translated from a fully spliced mRNA that readily exits the nucleus. Rev's nuclear localization signal (NLS) binds directly to KPNB1/Importin beta-1 without previous binding to KPNA1/Importin alpha-1. KPNB1 binds to the GDP bound form of RAN (Ran-GDP) and targets Rev to the nucleus. In the nucleus, the conversion from Ran-GDP to Ran-GTP dissociates Rev from KPNB1 and allows Rev's binding to the RRE in viral pre-mRNAs. Rev multimerization on the RRE via cooperative assembly exposes its nuclear export signal (NES) to the surface. Rev can then form a complex with XPO1/CRM1 and Ran-GTP, leading to nuclear export of the complex. Conversion from Ran-GTP to Ran-GDP mediates dissociation of the Rev/RRE/XPO1/RAN complex, so that Rev can return to the nucleus for a subsequent round of export. Beside KPNB1, also seems to interact with TNPO1/Transportin-1, RANBP5/IPO5 and IPO7/RANBP7 for nuclear import. The nucleoporin-like HRB/RIP is an essential cofactor that probably indirectly interacts with Rev to release HIV RNAs from the perinuclear region to the cytoplasm. In Homo sapiens (Human), this protein is Protein Rev.